Consider the following 579-residue polypeptide: Zinc finger protein 384 (579 aa).

Residues 171-198 are disordered; it reads TLTEEGGGGGGGGGTVAPPKPPRGRKKK. The span at 175–185 shows a compositional bias: gly residues; that stretch reads EGGGGGGGGGT. 8 C2H2-type zinc fingers span residues 229–251, 257–279, 285–307, 318–340, 346–368, 374–398, 404–426, and 434–456; these read YRCRMCSLTFYSKSEMQIHSKSH, HKCPHCSKTFANSSYLAQHIRIH, YSCNFCEKSFRQLSHLQQHTRIH, HKCPHCSKTFANTSYLAQHLRIH, YNCSYCQKAFRQLSHLQQHTRIH, YKCAHPGCEKAFTQLSNLQSHRRQH, FKCHNCHRAYTDAASLEAHLSTH, and YTCTICSRAYTSETYLMKHMRKH. Over residues 500–513 the composition is skewed to low complexity; it reads QAQASQASQQQQQQ. Residues 500–553 form a disordered region; sequence QAQASQASQQQQQQQPPPPQPPHFQSPGAAPQGGGGGDSNQNPPPQCSFDLTPY. A compositionally biased stretch (pro residues) spans 514-523; sequence QPPPPQPPHF.

The protein belongs to the krueppel C2H2-type zinc-finger protein family. As to quaternary structure, interacts with BCAR1. In terms of tissue distribution, expressed in osteocytes, osteoblasts, and chondrocytes in bone.

It localises to the nucleus. Transcription factor that binds the consensus DNA sequence [GC]AAAAA. Seems to bind and regulate the promoters of MMP1, MMP3, MMP7 and COL1A1. The chain is Zinc finger protein 384 (Znf384) from Rattus norvegicus (Rat).